A 225-amino-acid polypeptide reads, in one-letter code: Germin-like protein 8-7 (225 aa).

The first 23 residues, Met-1–Ala-23, serve as a signal peptide directing secretion. A disulfide bridge links Cys-33 with Cys-48. The Cupin type-1 domain occupies Ala-63 to Asp-213. Residue Asn-77 is glycosylated (N-linked (GlcNAc...) asparagine). The Mn(2+) site is built by His-110, His-112, and Glu-117. Residue Asn-136 is glycosylated (N-linked (GlcNAc...) asparagine). His-158 is a Mn(2+) binding site.

It belongs to the germin family. As to quaternary structure, oligomer (believed to be a pentamer but probably hexamer).

The protein localises to the secreted. It localises to the extracellular space. Its subcellular location is the apoplast. Functionally, plays a role in broad-spectrum disease resistance. Probably has no oxalate oxidase activity even if the active site is conserved. In Oryza sativa subsp. japonica (Rice), this protein is Germin-like protein 8-7 (GER6).